Here is a 238-residue protein sequence, read N- to C-terminus: Small ribosomal subunit protein uS2c (238 aa).

This sequence belongs to the universal ribosomal protein uS2 family.

The protein localises to the plastid. The protein resides in the chloroplast. The sequence is that of Small ribosomal subunit protein uS2c (rps2) from Jasminum nudiflorum (Winter jasmine).